Here is a 739-residue protein sequence, read N- to C-terminus: Catalase-peroxidase 2 (739 aa).

Positions 1-26 are cleaved as a signal peptide; the sequence is MKKSTIPSMSALTLAMSLAFGGAAIA. Residues 105-227 constitute a cross-link (tryptophyl-tyrosyl-methioninium (Trp-Tyr) (with M-253)); that stretch reads WHSAGVYRIF…MGATQMGLIY (123 aa). Catalysis depends on histidine 106, which acts as the Proton acceptor. Residues 227–253 constitute a cross-link (tryptophyl-tyrosyl-methioninium (Tyr-Met) (with W-105)); it reads YVNPEGPNGVPDPLASAKEIRDTFGRM. Histidine 268 is a heme b binding site.

This sequence belongs to the peroxidase family. Peroxidase/catalase subfamily. As to quaternary structure, homodimer or homotetramer. Heme b serves as cofactor. Formation of the three residue Trp-Tyr-Met cross-link is important for the catalase, but not the peroxidase activity of the enzyme.

It catalyses the reaction H2O2 + AH2 = A + 2 H2O. It carries out the reaction 2 H2O2 = O2 + 2 H2O. Bifunctional enzyme with both catalase and broad-spectrum peroxidase activity. The polypeptide is Catalase-peroxidase 2 (Shewanella sp. (strain ANA-3)).